The chain runs to 368 residues: 3-dehydroquinate synthase (368 aa).

NAD(+)-binding positions include 71-76 (DGESFK), 105-109 (GVIGD), 129-130 (TT), Lys-142, Lys-151, and 169-172 (TLRT). Zn(2+) is bound by residues Glu-184, His-247, and His-264.

It belongs to the sugar phosphate cyclases superfamily. Dehydroquinate synthase family. NAD(+) is required as a cofactor. The cofactor is Co(2+). Requires Zn(2+) as cofactor.

Its subcellular location is the cytoplasm. It catalyses the reaction 7-phospho-2-dehydro-3-deoxy-D-arabino-heptonate = 3-dehydroquinate + phosphate. It functions in the pathway metabolic intermediate biosynthesis; chorismate biosynthesis; chorismate from D-erythrose 4-phosphate and phosphoenolpyruvate: step 2/7. In terms of biological role, catalyzes the conversion of 3-deoxy-D-arabino-heptulosonate 7-phosphate (DAHP) to dehydroquinate (DHQ). This Ralstonia nicotianae (strain ATCC BAA-1114 / GMI1000) (Ralstonia solanacearum) protein is 3-dehydroquinate synthase.